We begin with the raw amino-acid sequence, 344 residues long: Holliday junction branch migration complex subunit RuvB (344 aa).

The interval 4 to 184 (QDRIIDANAK…FGIVQRLEFY (181 aa)) is large ATPase domain (RuvB-L). ATP-binding positions include R24, G65, K68, T69, T70, 131–133 (EDF), R174, Y184, and R221. Residue T69 participates in Mg(2+) binding. Residues 185-255 (NIEDLTHIVE…IADLALNMLN (71 aa)) form a small ATPAse domain (RuvB-S) region. Positions 258–344 (EHGFDHMDRR…ALKQDSLPGI (87 aa)) are head domain (RuvB-H). DNA contacts are provided by R294, R313, and R318.

Belongs to the RuvB family. In terms of assembly, homohexamer. Forms an RuvA(8)-RuvB(12)-Holliday junction (HJ) complex. HJ DNA is sandwiched between 2 RuvA tetramers; dsDNA enters through RuvA and exits via RuvB. An RuvB hexamer assembles on each DNA strand where it exits the tetramer. Each RuvB hexamer is contacted by two RuvA subunits (via domain III) on 2 adjacent RuvB subunits; this complex drives branch migration. In the full resolvosome a probable DNA-RuvA(4)-RuvB(12)-RuvC(2) complex forms which resolves the HJ.

The protein resides in the cytoplasm. It carries out the reaction ATP + H2O = ADP + phosphate + H(+). The RuvA-RuvB-RuvC complex processes Holliday junction (HJ) DNA during genetic recombination and DNA repair, while the RuvA-RuvB complex plays an important role in the rescue of blocked DNA replication forks via replication fork reversal (RFR). RuvA specifically binds to HJ cruciform DNA, conferring on it an open structure. The RuvB hexamer acts as an ATP-dependent pump, pulling dsDNA into and through the RuvAB complex. RuvB forms 2 homohexamers on either side of HJ DNA bound by 1 or 2 RuvA tetramers; 4 subunits per hexamer contact DNA at a time. Coordinated motions by a converter formed by DNA-disengaged RuvB subunits stimulates ATP hydrolysis and nucleotide exchange. Immobilization of the converter enables RuvB to convert the ATP-contained energy into a lever motion, pulling 2 nucleotides of DNA out of the RuvA tetramer per ATP hydrolyzed, thus driving DNA branch migration. The RuvB motors rotate together with the DNA substrate, which together with the progressing nucleotide cycle form the mechanistic basis for DNA recombination by continuous HJ branch migration. Branch migration allows RuvC to scan DNA until it finds its consensus sequence, where it cleaves and resolves cruciform DNA. This chain is Holliday junction branch migration complex subunit RuvB, found in Saccharophagus degradans (strain 2-40 / ATCC 43961 / DSM 17024).